Consider the following 117-residue polypeptide: Minor capsid protein p17 (117 aa).

Asparagine 12 carries N-linked (GlcNAc...) asparagine; by host glycosylation. The chain crosses the membrane as a helical span at residues 39 to 59; that stretch reads AIILGILILLVIILIVVAIVY. Residues asparagine 61 and asparagine 98 are each glycosylated (N-linked (GlcNAc...) asparagine; by host). The interval 97-117 is disordered; it reads KNSTTQQHIPSDEQLAELAHS.

Belongs to the asfivirus minor capsid protein p17 family. Interacts with the minor capsid protein M1249L and with the hexon capsid protein p72 capsomers; these interactions form a rigid zipper structure that stabilizes the capsomers. Interacts with host STING1.

It is found in the virion membrane. Its subcellular location is the host endoplasmic reticulum membrane. Together with the penton and the other minor capsid proteins (M1249L, p49), forms a complicated network immediately below the outer capsid shell, stabilizing the whole capsid. Three copies of p17 encircle each p72 capsomer in the inner capsid shell, anchoring p72 capsomers on the inner membrane. Required for the assembly of the capsid and icosahedral morphogenesis. Additionally, inhibits the host cGAS-STING pathway through its interaction with STING1 and subsequent interference of the recruitment of downstream components TBK1 and IKBKE. The sequence is that of Minor capsid protein p17 from Ornithodoros (relapsing fever ticks).